We begin with the raw amino-acid sequence, 57 residues long: UPF0391 membrane protein Nwi_2359 (57 aa).

Helical transmembrane passes span 4 to 24 (WVVT…GGIA) and 30 to 50 (IAKI…VVGF).

Belongs to the UPF0391 family.

It is found in the cell membrane. In Nitrobacter winogradskyi (strain ATCC 25391 / DSM 10237 / CIP 104748 / NCIMB 11846 / Nb-255), this protein is UPF0391 membrane protein Nwi_2359.